Here is a 429-residue protein sequence, read N- to C-terminus: MTIISDVYAREVLDSRGNPTVEVEVHLESGVMGRALVPSGASTGEYEAVELRDGGDRYMGKGVQKAVDNVNEKIAPELIGENALDQIGIDRLMIELDGTENKGNFGANAILGVSMAVAHAAANALDIPLYVYLGGFNAKQLPVPMMNIINGGEHADNNVDIQEFMVMPVGAESFKEALRMGAEIFHNLKSVLKAKGYNTAVGDEGGFAPNLSSNEEALATIIEAIEKAGYKPGEQVKLAMDVASSELYSKEDGKYHLAGEGKVLSSEEMVSFYEELVSKYPIISIEDGLDENDWEGHKLLTERLGDKVQLVGDDLFVTNTKKLAEGIEKGIGNSILIKVNQIGTLTETFDAIEMAKRAGYTAVISHRSGETEDATIADIAVATNAGQIKTGAPSRTDRVAKYNQLLRIEDELADLAQYNGLKSFYNLSK.

Glutamine 162 is a (2R)-2-phosphoglycerate binding site. Glutamate 204 serves as the catalytic Proton donor. Mg(2+)-binding residues include aspartate 241, glutamate 286, and aspartate 313. Positions 338, 367, 368, and 389 each coordinate (2R)-2-phosphoglycerate. Catalysis depends on lysine 338, which acts as the Proton acceptor.

It belongs to the enolase family. Mg(2+) serves as cofactor.

Its subcellular location is the cytoplasm. It localises to the secreted. It is found in the cell surface. The enzyme catalyses (2R)-2-phosphoglycerate = phosphoenolpyruvate + H2O. Its pathway is carbohydrate degradation; glycolysis; pyruvate from D-glyceraldehyde 3-phosphate: step 4/5. Catalyzes the reversible conversion of 2-phosphoglycerate (2-PG) into phosphoenolpyruvate (PEP). It is essential for the degradation of carbohydrates via glycolysis. This chain is Enolase, found in Shouchella clausii (strain KSM-K16) (Alkalihalobacillus clausii).